A 228-amino-acid chain; its full sequence is Carbonic anhydrase (228 aa).

Positions 56, 58, 112, and 115 each coordinate Zn(2+).

Belongs to the beta-class carbonic anhydrase family. Requires Zn(2+) as cofactor.

The catalysed reaction is hydrogencarbonate + H(+) = CO2 + H2O. Functionally, catalyzes the reversible hydration of CO(2) to H(2)CO(3). The main role may be to provide inorganic carbon for the bicarbonate-dependent carboxylation reactions catalyzed by pyruvate carboxylase, acetyl-CoA carboxylase and carbamoyl-phosphate synthetase. Involved in osmoadaptation. In Emericella nidulans (strain FGSC A4 / ATCC 38163 / CBS 112.46 / NRRL 194 / M139) (Aspergillus nidulans), this protein is Carbonic anhydrase.